The following is a 320-amino-acid chain: V-set and transmembrane domain-containing protein 4 (320 aa).

The N-terminal stretch at 1–23 is a signal peptide; sequence MRLLALAAAALLARAPAPEVCAA. The 132-residue stretch at 24–155 folds into the Ig-like domain; sequence LNVTVSPGPV…SSATEMRVIS (132 aa). Residues 24–180 are Extracellular-facing; the sequence is LNVTVSPGPV…WAFFEDLYVY (157 aa). 4 N-linked (GlcNAc...) asparagine glycosylation sites follow: Asn-25, Asn-41, Asn-89, and Asn-144. Residues Cys-46 and Cys-127 are joined by a disulfide bond. The chain crosses the membrane as a helical span at residues 181–201; that stretch reads AVLVCCVGILSILLFMLVIVW. Over 202 to 320 the chain is Cytoplasmic; sequence QSVFNKRKSR…AQILFEENKL (119 aa).

In terms of processing, proteolytically cleaved to generate a bioactive peptide.

It localises to the secreted. It is found in the cell membrane. Its function is as follows. Peptide Lv enhances L-type voltage-gated calcium channel (L-VGCC) currents in retinal photoreceptors. The sequence is that of V-set and transmembrane domain-containing protein 4 (VSTM4) from Homo sapiens (Human).